Here is a 352-residue protein sequence, read N- to C-terminus: Ion-translocating oxidoreductase complex subunit D (352 aa).

Helical transmembrane passes span 20–40, 42–62, 78–109, 123–143, and 148–168; these read IMLL…WFFG, GTLV…ALVL, ALLT…VIIA, PAMI…TSWL, and IAVN…GHTA. An FMN phosphoryl threonine modification is found at Thr187. A run of 5 helical transmembrane segments spans residues 214–234, 242–262, 267–287, 301–321, and 322–342; these read ILAG…GVWL, WHIP…GWLF, LAAP…FFIL, LIFG…GGYP, and DGVA…DYYT.

The protein belongs to the NqrB/RnfD family. In terms of assembly, the complex is composed of six subunits: RsxA, RsxB, RsxC, RsxD, RsxE and RsxG. It depends on FMN as a cofactor.

It localises to the cell inner membrane. In terms of biological role, part of a membrane-bound complex that couples electron transfer with translocation of ions across the membrane. Required to maintain the reduced state of SoxR. The protein is Ion-translocating oxidoreductase complex subunit D of Escherichia coli O157:H7.